Reading from the N-terminus, the 244-residue chain is 3-oxoacyl-[acyl-carrier-protein] reductase FabG (244 aa).

NADP(+) is bound by residues 12 to 15 (GASR) and Thr37. Gly50 and Gly53 together coordinate Ca(2+). Residues 59 to 60 (NV) and Asn86 each bind NADP(+). Ser138 serves as a coordination point for substrate. Residue Asn145 coordinates Ca(2+). Tyr151 serves as the catalytic Proton acceptor. NADP(+)-binding positions include 151–155 (YAAAK) and Ile184. Ca(2+) contacts are provided by Glu233 and Thr234.

It belongs to the short-chain dehydrogenases/reductases (SDR) family. In terms of assembly, homotetramer.

It carries out the reaction a (3R)-hydroxyacyl-[ACP] + NADP(+) = a 3-oxoacyl-[ACP] + NADPH + H(+). The catalysed reaction is 3-oxobutanoyl-[ACP] + NADPH + H(+) = (3R)-hydroxybutanoyl-[ACP] + NADP(+). It catalyses the reaction 3-oxopentanoyl-[ACP] + NADPH + H(+) = (3R)-hydroxypentanoyl-[ACP] + NADP(+). The enzyme catalyses 3-oxohexanoyl-[ACP] + NADPH + H(+) = (3R)-hydroxyhexanoyl-[ACP] + NADP(+). It carries out the reaction 3-oxoheptanoyl-[ACP] + NADPH + H(+) = (3R)-hydroxyheptanoyl-[ACP] + NADP(+). The catalysed reaction is 3-oxooctanoyl-[ACP] + NADPH + H(+) = (3R)-hydroxyoctanoyl-[ACP] + NADP(+). It catalyses the reaction 3-oxononanoyl-[ACP] + NADPH + H(+) = (3R)-hydroxynonanoyl-[ACP] + NADP(+). The enzyme catalyses 3-oxodecanoyl-[ACP] + NADPH + H(+) = (3R)-hydroxydecanoyl-[ACP] + NADP(+). It carries out the reaction 3-oxohexadecanoyl-[ACP] + NADPH + H(+) = (3R)-hydroxyhexadecanoyl-[ACP] + NADP(+). The catalysed reaction is 3-oxo-(9Z)-hexadecenoyl-[ACP] + NADPH + H(+) = (3R)-hydroxy-(9Z)-hexadecenoyl-[ACP] + NADP(+). It catalyses the reaction 4-methyl-3-oxopentanoyl-[ACP] + NADPH + H(+) = (3R)-hydroxy-4-methylpentanoyl-[ACP] + NADP(+). The enzyme catalyses 5-methyl-3-oxohexanoyl-[ACP] + NADPH + H(+) = (3R)-hydroxy-5-methylhexanoyl-[ACP] + NADP(+). It carries out the reaction 4-methyl-3-oxohexanoyl-[ACP] + NADPH + H(+) = (3R)-hydroxy-4-methylhexanoyl-[ACP] + NADP(+). It participates in lipid metabolism; fatty acid biosynthesis. Inhibited by cinnamic acid derivatives. Functionally, catalyzes the NADPH-dependent reduction of beta-ketoacyl-ACP substrates to beta-hydroxyacyl-ACP products, the first reductive step in the elongation cycle of fatty acid biosynthesis. This is 3-oxoacyl-[acyl-carrier-protein] reductase FabG (fabG) from Escherichia coli (strain K12).